The chain runs to 243 residues: Aldehyde decarbonylase (243 aa).

Glutamate 45, glutamate 73, histidine 76, glutamate 128, and histidine 160 together coordinate Fe cation.

It belongs to the aldehyde decarbonylase family. Binds 2 metal cations per subunit. The catalytic dinuclear metal-binding site could be either a di-iron or a manganese-iron cofactor. serves as cofactor.

The catalysed reaction is a long-chain fatty aldehyde + 2 NADPH + O2 + H(+) = a long-chain alkane + formate + 2 NADP(+) + H2O. Catalyzes the decarbonylation of fatty aldehydes to alkanes. Requires the presence of ferredoxin, ferredoxin reductase and NADPH for in vitro decarbonylase activity. Involved in the biosynthesis of alkanes, mainly heptadecane and pentadecane. The chain is Aldehyde decarbonylase from Prochlorococcus marinus (strain MIT 9313).